The primary structure comprises 270 residues: Myeloid leukemia factor 1 (270 aa).

Phosphoserine occurs at positions 6, 8, 32, and 34. Positions 50–125 (RARNRMGHED…VGDEPPKVFQ (76 aa)) are interaction with COPS3. 2 disordered regions span residues 127–148 (STQTRRAPGGIKETRKALRDSD) and 221–247 (RSVAHENSGSRELKRREKHHQSPAIEH). Residues 138–148 (KETRKALRDSD) are compositionally biased toward basic and acidic residues.

This sequence belongs to the MLF family. Interacts with CENPU. Also interacts with NRBP1/MADM, YWHAZ/14-3-3-zeta and HNRPUL2/MANP. NRBP1 recruits a serine kinase which phosphorylates both itself and MLF1. Phosphorylated MLF1 then binds to YWHAZ and is retained in the cytoplasm. Retained in the nucleus by binding to HNRPUL2. Binds to COPS3/CSN3 which is required for suppression of COP1 and activation of p53. In terms of processing, phosphorylation is required for binding to YWHAZ.

Its subcellular location is the cytoplasm. It is found in the nucleus. The protein resides in the cell projection. It localises to the cilium. The protein localises to the cytoskeleton. Its subcellular location is the cilium basal body. Its function is as follows. Involved in lineage commitment of primary hemopoietic progenitors by restricting erythroid formation and enhancing myeloid formation. Interferes with erythropoietin-induced erythroid terminal differentiation by preventing cells from exiting the cell cycle through suppression of CDKN1B/p27Kip1 levels. Suppresses COP1 activity via CSN3 which activates p53 and induces cell cycle arrest. Binds DNA and affects the expression of a number of genes so may function as a transcription factor in the nucleus. The sequence is that of Myeloid leukemia factor 1 (MLF1) from Bos taurus (Bovine).